The sequence spans 385 residues: MLKTQKDKKLENFFSSNNKTKKKKNIIVGLSGGVDSSLSAALLVERGWNVEGLTLWLIKGQGSCCSEGLVDAAGLCEDLGINHKIIDSREIFEREVIKKTTESYEKGFTPLPCSMCNKNVKFEEMLNYAVNKKDFTHIATGHYARIKKSSYAETLDCKSFKFKDFLLLRGADENKDQSYFLYSLSQEVLSRLEFPLGEMKKEETRKEALRLGLRTAQKPESQDLCLVEHYGSMQRFIDKHIEPKEGEIVHVNGKVLGTHNGIQHFTIGQRKGLGIAWPDPLYVKSLDRVKNIVYVADKSDLFNREAIITKVNWVSIEEPKQEIEVEAQIRYRSHPVKGTLIPLKNFDNPTTTFKLIFEESQSSVTPGQAAVFYKGEILLGGGLIS.

ATP contacts are provided by residues 29–36 (GLSGGVDS) and Leu55. Residue Cys116 is the Nucleophile of the active site. Cysteines 116 and 225 form a disulfide. ATP is bound at residue Gly141. An interaction with tRNA region spans residues 175–177 (KDQ). Residue Cys225 is the Cysteine persulfide intermediate of the active site. The segment at 330–331 (RY) is interaction with tRNA.

This sequence belongs to the MnmA/TRMU family.

It is found in the cytoplasm. The enzyme catalyses S-sulfanyl-L-cysteinyl-[protein] + uridine(34) in tRNA + AH2 + ATP = 2-thiouridine(34) in tRNA + L-cysteinyl-[protein] + A + AMP + diphosphate + H(+). Functionally, catalyzes the 2-thiolation of uridine at the wobble position (U34) of tRNA, leading to the formation of s(2)U34. This Prochlorococcus marinus (strain MIT 9301) protein is tRNA-specific 2-thiouridylase MnmA.